The primary structure comprises 864 residues: Dynamin-1 (864 aa).

The region spanning 28 to 294 (DLDLPQIAVV…LTNHIRDTLP (267 aa)) is the Dynamin-type G domain. The interval 38–45 (GGQSAGKS) is G1 motif. The GDP site is built by Ser41, Gly43, Lys44, Ser45, Ser46, Arg59, and Gly60. Residues 64 to 66 (VTR) are G2 motif. Residue Tyr80 is modified to Phosphotyrosine. The residue at position 125 (Tyr125) is a 3'-nitrotyrosine; alternate. Phosphotyrosine; alternate is present on Tyr125. The G3 motif stretch occupies residues 136–139 (DLPG). A G4 motif region spans residues 205 to 208 (TKLD). Positions 206, 208, 211, 236, 237, and 239 each coordinate GDP. The segment at 235-238 (VNRS) is G5 motif. Residues Ser306 and Ser347 each carry the phosphoserine modification. Residue Tyr354 is modified to Phosphotyrosine. Ser512 bears the Phosphoserine mark. Residues 519–625 (LVIRKGWLTI…WKASFLRAGV (107 aa)) form the PH domain. Residues 659 to 750 (VETIRNLVDS…IIGDINTTTV (92 aa)) enclose the GED domain. The interval 767–864 (SVPAGRRSPT…PESPRPPFDL (98 aa)) is disordered. Position 774 is a phosphoserine; by GSK3-beta (Ser774). The residue at position 778 (Ser778) is a Phosphoserine. Arg796 bears the Omega-N-methylarginine mark. Ser822 carries the phosphoserine modification. Residues 825–843 (PFGPPPQVPSRPNRAPPGV) are compositionally biased toward pro residues. A phosphoserine mark is found at Ser851 and Ser857.

It belongs to the TRAFAC class dynamin-like GTPase superfamily. Dynamin/Fzo/YdjA family. In terms of assembly, homodimer; homodimerization is mediated by the dynamin-type G domain which promotes assembly-stimulated GTPase activity. Homo-tetramer formed from two dimers in the absence of lipid. Oligomerizes into a helical polymer that self-assembles around the vesicle membrane, when associated to the menbrane through lipid binding. Interacts (via C-terminal proline-rich domain (PRD)) with SNX9 (via SH3 domain); this interaction allows regulation of DNM1 self-assembly during late stages of endocytic vesicle formation and supports DNM1's early functions in accelerating clathrin-coated pits (CCPs) maturation in non neuronals cell. Interacts (via C-terminal proline-rich domain (PRD)) with MYO1E (via SH3 domain); this interaction regulates receptor-mediated endocytosis. Interacts with SNX33 (via SH3 domain); this interaction decreases DNM1-dependent endocytosis. Interacts with DIAPH1. Interacts with GRB2 (via SH3 domain); this interaction mediates disassembly of DNM1 polymers, therefore modulates self-assembly. Forms a complex with BIN1 (via SH3 domain) and SH3GL2 (via SH3 domain). Forms a complex with SH3GL2 (via SH3 domain) and AMPH (via SH3 domain). Forms a complex with SH3GL2 (via SH3 domain) and SYNJ1. Interacts with AMPH. Interacts (via C-terminal proline-rich domain (PRD)) with SYT1; this interaction facilitates vesicle fission during clathrin-mediated endocytosis (CME). Interacts (via C-terminal proline-rich domain (PRD)) with PLCG1 (via SH3 domain); this interaction stimulates the release of GDP from DNM1 and enhances DNM1-dependent endocytosis. Interacts with SNPH; this interaction inhibits the binding of DNM1 to AMPH and DNM1-receptor-mediated endocytosis. Interacts with CAV1. Interacts with SH3GLB1 (via SH3 domain). Interacts with PACSIN1 (via SH3 domain), PACSIN2 (via SH3 domain) and PACSIN3 (via SH3 domain). Interacts with UNC119; this interaction decreases DNM1's GTPase activity and affects DNM1's interaction with AMPH. Interacts (GTP-bound form) with DNAJC6; this interaction allows clathrin-coated vesicle (CCV) formation at the plasma membrane. In terms of processing, phosphorylation at Ser-774 by GSK3B/GSK3-beta leads to inactivation of receptor-mediated endocytosis in non-neuronal cells. Dephosphorylation at Ser-774, through the EGFR downstream signaling, leads to activation and regulates early stages of clathrin-mediated endocytosis (CME). Phosphorylated by CDK5 leading to synaptic vesicle endocytosis (SVE) activation.

It localises to the cell membrane. The protein resides in the membrane. It is found in the clathrin-coated pit. Its subcellular location is the cytoplasmic vesicle. The protein localises to the presynapse. It localises to the secretory vesicle. The protein resides in the chromaffin granule. The enzyme catalyses GTP + H2O = GDP + phosphate + H(+). With respect to regulation, GTPase activity is activated by 1-phosphatidyl-1D-myo-inositol 4,5-bisphosphate. GTPase activity is inhibited by the heterodimer G protein formed by GNB1 and GNG2 with an IC(50)=400 nM when DNM1 concentration is 5 nM. Catalyzes the hydrolysis of GTP and utilizes this energy to mediate vesicle scission and participates in many forms of endocytosis, such as clathrin-mediated endocytosis or synaptic vesicle endocytosis as well as rapid endocytosis (RE). Associates to the membrane, through lipid binding, and self-assembles into rings and stacks of interconnected rings through oligomerization to form a helical polymer around the vesicle membrane leading to constriction of invaginated coated pits around their necks. Self-assembly of the helical polymer induces membrane tubules narrowing until the polymer reaches a length sufficient to trigger GTP hydrolysis. Depending on the curvature imposed on the tubules, membrane detachment from the helical polymer upon GTP hydrolysis can cause spontaneous hemifission followed by complete fission. May play a role in regulating early stages of clathrin-mediated endocytosis in non-neuronal cells through its activation by dephosphorylation via the signaling downstream of EGFR. Controls vesicle size at a step before fission, during formation of membrane pits, at hippocampal synapses. Controls plastic adaptation of the synaptic vesicle recycling machinery to high levels of activity. Mediates rapid endocytosis (RE), a Ca(2+)-dependent and clathrin- and K(+)-independent process in chromaffin cells. Microtubule-associated force-producing protein involved in producing microtubule bundles and able to bind and hydrolyze GTP. Through its interaction with DNAJC6, acts during the early steps of clathrin-coated vesicle (CCV) formation. In Homo sapiens (Human), this protein is Dynamin-1.